The chain runs to 85 residues: MADDHPQDQAEHERIFKCFDANGDGKISASELGDALKTLGSVTPDEVKHMMAEIDTDGDGFISFQEFTNFARANRGLVKDVAKIF.

EF-hand domains follow at residues 7 to 42 (QDQA…LGSV) and 45 to 77 (DEVK…NRGL). 9 residues coordinate Ca(2+): Asp-20, Asn-22, Asp-24, Lys-26, Glu-31, Asp-55, Asp-57, Asp-59, and Glu-66.

The protein is Polcalcin Aln g 4 of Alnus glutinosa (European alder).